The primary structure comprises 222 residues: Probable fructose-6-phosphate aldolase (222 aa).

Lys87 acts as the Schiff-base intermediate with substrate in catalysis.

The protein belongs to the transaldolase family. Type 3A subfamily.

The protein resides in the cytoplasm. The catalysed reaction is beta-D-fructose 6-phosphate = dihydroxyacetone + D-glyceraldehyde 3-phosphate. In terms of biological role, catalyzes the reversible formation of fructose 6-phosphate from dihydroxyacetone and D-glyceraldehyde 3-phosphate via an aldolization reaction. This Streptococcus pneumoniae (strain ATCC 700669 / Spain 23F-1) protein is Probable fructose-6-phosphate aldolase.